The chain runs to 123 residues: Small ribosomal subunit protein eS25 (123 aa).

The segment covering 1 to 13 (MPPKKDTKGDSKK) has biased composition (basic and acidic residues). A disordered region spans residues 1 to 34 (MPPKKDTKGDSKKGQKAKAGSGGGKAKKKKWSKG). Over residues 25–34 (KAKKKKWSKG) the composition is skewed to basic residues.

It belongs to the eukaryotic ribosomal protein eS25 family.

The protein is Small ribosomal subunit protein eS25 (RPS25) of Branchiostoma belcheri (Amphioxus).